The sequence spans 410 residues: Gamma-glutamyl phosphate reductase (410 aa).

Belongs to the gamma-glutamyl phosphate reductase family.

It localises to the cytoplasm. The enzyme catalyses L-glutamate 5-semialdehyde + phosphate + NADP(+) = L-glutamyl 5-phosphate + NADPH + H(+). It participates in amino-acid biosynthesis; L-proline biosynthesis; L-glutamate 5-semialdehyde from L-glutamate: step 2/2. In terms of biological role, catalyzes the NADPH-dependent reduction of L-glutamate 5-phosphate into L-glutamate 5-semialdehyde and phosphate. The product spontaneously undergoes cyclization to form 1-pyrroline-5-carboxylate. The protein is Gamma-glutamyl phosphate reductase of Sulfurimonas denitrificans (strain ATCC 33889 / DSM 1251) (Thiomicrospira denitrificans (strain ATCC 33889 / DSM 1251)).